Here is a 162-residue protein sequence, read N- to C-terminus: Ribosome maturation factor RimM (162 aa).

Residues 86–160 (EGRYYYFALI…SIHVDPIPGL (75 aa)) enclose the PRC barrel domain.

The protein belongs to the RimM family. In terms of assembly, binds ribosomal protein uS19.

It is found in the cytoplasm. Its function is as follows. An accessory protein needed during the final step in the assembly of 30S ribosomal subunit, possibly for assembly of the head region. Essential for efficient processing of 16S rRNA. May be needed both before and after RbfA during the maturation of 16S rRNA. It has affinity for free ribosomal 30S subunits but not for 70S ribosomes. This Thermus thermophilus (strain ATCC 27634 / DSM 579 / HB8) protein is Ribosome maturation factor RimM.